Here is an 83-residue protein sequence, read N- to C-terminus: Cytochrome b559 subunit alpha (83 aa).

A helical membrane pass occupies residues 21–35 (VIHSITIPSLFIAGW). His23 lines the heme pocket.

It belongs to the PsbE/PsbF family. As to quaternary structure, heterodimer of an alpha subunit and a beta subunit. PSII is composed of 1 copy each of membrane proteins PsbA, PsbB, PsbC, PsbD, PsbE, PsbF, PsbH, PsbI, PsbJ, PsbK, PsbL, PsbM, PsbT, PsbX, PsbY, PsbZ, Psb30/Ycf12, at least 3 peripheral proteins of the oxygen-evolving complex and a large number of cofactors. It forms dimeric complexes. Requires heme b as cofactor.

Its subcellular location is the plastid. It localises to the chloroplast thylakoid membrane. In terms of biological role, this b-type cytochrome is tightly associated with the reaction center of photosystem II (PSII). PSII is a light-driven water:plastoquinone oxidoreductase that uses light energy to abstract electrons from H(2)O, generating O(2) and a proton gradient subsequently used for ATP formation. It consists of a core antenna complex that captures photons, and an electron transfer chain that converts photonic excitation into a charge separation. The polypeptide is Cytochrome b559 subunit alpha (Anthoceros angustus (Hornwort)).